The chain runs to 273 residues: Ribosomal RNA small subunit methyltransferase A (273 aa).

Positions 18, 20, 45, 66, 91, and 113 each coordinate S-adenosyl-L-methionine.

Belongs to the class I-like SAM-binding methyltransferase superfamily. rRNA adenine N(6)-methyltransferase family. RsmA subfamily.

Its subcellular location is the cytoplasm. The enzyme catalyses adenosine(1518)/adenosine(1519) in 16S rRNA + 4 S-adenosyl-L-methionine = N(6)-dimethyladenosine(1518)/N(6)-dimethyladenosine(1519) in 16S rRNA + 4 S-adenosyl-L-homocysteine + 4 H(+). Its function is as follows. Specifically dimethylates two adjacent adenosines (A1518 and A1519) in the loop of a conserved hairpin near the 3'-end of 16S rRNA in the 30S particle. May play a critical role in biogenesis of 30S subunits. This Cronobacter sakazakii (strain ATCC BAA-894) (Enterobacter sakazakii) protein is Ribosomal RNA small subunit methyltransferase A.